Here is a 190-residue protein sequence, read N- to C-terminus: Protein SYM1 (190 aa).

4 consecutive transmembrane segments (helical) span residues 16–36, 54–74, 91–111, and 131–151; these read PVLG…VIAQ, IVTW…RTLE, LDQF…MTFM, and LQAN…LVPL.

It belongs to the peroxisomal membrane protein PXMP2/4 family.

It localises to the mitochondrion inner membrane. Functionally, may be involved in cellular response to stress. Required to maintain mitochondrial DNA (mtDNA) integrity and stability. The protein is Protein SYM1 (SYM1) of Cryptococcus neoformans var. neoformans serotype D (strain B-3501A) (Filobasidiella neoformans).